The sequence spans 126 residues: Histone H2B 7 (126 aa).

Positions Met-1–Lys-12 are enriched in low complexity. Residues Met-1–Lys-35 are disordered. Residues Lys-6 and Lys-13 each carry the N6-acetyllysine modification. Residues Lys-13–Arg-34 are compositionally biased toward basic residues. Ser-15 bears the Phosphoserine mark. N6-acetyllysine is present on residues Lys-16 and Lys-21. Residue Ser-113 is glycosylated (O-linked (GlcNAc) serine). A Glycyl lysine isopeptide (Lys-Gly) (interchain with G-Cter in ubiquitin) cross-link involves residue Lys-121.

Belongs to the histone H2B family. In terms of assembly, the nucleosome is a histone octamer containing two molecules each of H2A, H2B, H3 and H4 assembled in one H3-H4 heterotetramer and two H2A-H2B heterodimers. The octamer wraps approximately 147 bp of DNA. Post-translationally, monoubiquitination of Lys-121 by the BRE1 gives a specific tag for epigenetic transcriptional activation and is also prerequisite for histone H3 'Lys-4' and 'Lys-79' methylation. Phosphorylated on Ser-15 during apoptosis; which facilitates apoptotic chromatin condensation. In terms of processing, glcNAcylation at Ser-113 promotes monoubiquitination of Lys-121. It fluctuates in response to extracellular glucose, and associates with transcribed genes.

The protein resides in the nucleus. The protein localises to the chromosome. Functionally, core component of nucleosome. Nucleosomes wrap and compact DNA into chromatin, limiting DNA accessibility to the cellular machineries which require DNA as a template. Histones thereby play a central role in transcription regulation, DNA repair, DNA replication and chromosomal stability. DNA accessibility is regulated via a complex set of post-translational modifications of histones, also called histone code, and nucleosome remodeling. This chain is Histone H2B 7 (H2B-VII), found in Gallus gallus (Chicken).